A 313-amino-acid polypeptide reads, in one-letter code: tRNA dimethylallyltransferase (313 aa).

20 to 27 is a binding site for ATP; the sequence is GPTGTGKS. A substrate-binding site is contributed by 22-27; that stretch reads TGTGKS.

Belongs to the IPP transferase family. In terms of assembly, monomer. The cofactor is Mg(2+).

It carries out the reaction adenosine(37) in tRNA + dimethylallyl diphosphate = N(6)-dimethylallyladenosine(37) in tRNA + diphosphate. Catalyzes the transfer of a dimethylallyl group onto the adenine at position 37 in tRNAs that read codons beginning with uridine, leading to the formation of N6-(dimethylallyl)adenosine (i(6)A). In Kocuria rhizophila (strain ATCC 9341 / DSM 348 / NBRC 103217 / DC2201), this protein is tRNA dimethylallyltransferase.